Reading from the N-terminus, the 192-residue chain is Segregation and condensation protein B (192 aa).

This sequence belongs to the ScpB family. As to quaternary structure, homodimer. Homodimerization may be required to stabilize the binding of ScpA to the Smc head domains. Component of a cohesin-like complex composed of ScpA, ScpB and the Smc homodimer, in which ScpA and ScpB bind to the head domain of Smc. The presence of the three proteins is required for the association of the complex with DNA.

It localises to the cytoplasm. Functionally, participates in chromosomal partition during cell division. May act via the formation of a condensin-like complex containing Smc and ScpA that pull DNA away from mid-cell into both cell halves. This is Segregation and condensation protein B from Mycoplasma mobile (strain ATCC 43663 / 163K / NCTC 11711) (Mesomycoplasma mobile).